We begin with the raw amino-acid sequence, 150 residues long: Putative ribosome maturation factor RimP (150 aa).

This sequence belongs to the RimP family.

The protein localises to the cytoplasm. Functionally, required for maturation of 30S ribosomal subunits. The polypeptide is Putative ribosome maturation factor RimP (Mycobacterium leprae (strain TN)).